An 87-amino-acid chain; its full sequence is Conotoxin Cl12.3 (87 aa).

An N-terminal signal peptide occupies residues 1–19 (MKLTCVLVVLLLFLPYGDL). Positions 20 to 42 (ITNNYIGGAARKVTPWRRNLKTR) are excised as a propeptide.

It belongs to the conotoxin O1 superfamily. In terms of processing, contains 4 disulfide bonds. Expressed by the venom duct.

Its subcellular location is the secreted. The protein is Conotoxin Cl12.3 of Californiconus californicus (California cone).